Here is a 227-residue protein sequence, read N- to C-terminus: Cytidylate kinase (227 aa).

7-15 (GPSGAGKGT) serves as a coordination point for ATP.

This sequence belongs to the cytidylate kinase family. Type 1 subfamily.

It is found in the cytoplasm. The catalysed reaction is CMP + ATP = CDP + ADP. It catalyses the reaction dCMP + ATP = dCDP + ADP. This chain is Cytidylate kinase, found in Actinobacillus succinogenes (strain ATCC 55618 / DSM 22257 / CCUG 43843 / 130Z).